Here is a 179-residue protein sequence, read N- to C-terminus: tRNA-splicing endonuclease (179 aa).

Active-site residues include Tyr-115, His-125, and Lys-156.

It belongs to the tRNA-intron endonuclease family. Archaeal short subfamily. In terms of assembly, homotetramer; although the tetramer contains four active sites, only two participate in the cleavage. Therefore, it should be considered as a dimer of dimers.

The catalysed reaction is pretRNA = a 3'-half-tRNA molecule with a 5'-OH end + a 5'-half-tRNA molecule with a 2',3'-cyclic phosphate end + an intron with a 2',3'-cyclic phosphate and a 5'-hydroxyl terminus.. Endonuclease that removes tRNA introns. Cleaves pre-tRNA at the 5'- and 3'-splice sites to release the intron. The products are an intron and two tRNA half-molecules bearing 2',3' cyclic phosphate and 5'-OH termini. Recognizes a pseudosymmetric substrate in which 2 bulged loops of 3 bases are separated by a stem of 4 bp. The chain is tRNA-splicing endonuclease (endA) from Methanocaldococcus jannaschii (strain ATCC 43067 / DSM 2661 / JAL-1 / JCM 10045 / NBRC 100440) (Methanococcus jannaschii).